The sequence spans 239 residues: Pyridoxine 5'-phosphate synthase (239 aa).

Asn7 contributes to the 3-amino-2-oxopropyl phosphate binding site. 9–10 (DH) contributes to the 1-deoxy-D-xylulose 5-phosphate binding site. A 3-amino-2-oxopropyl phosphate-binding site is contributed by Arg18. The active-site Proton acceptor is the His43. 1-deoxy-D-xylulose 5-phosphate is bound by residues Arg45 and His50. Glu70 serves as the catalytic Proton acceptor. Residue Thr100 participates in 1-deoxy-D-xylulose 5-phosphate binding. The active-site Proton donor is the His191. 3-amino-2-oxopropyl phosphate contacts are provided by residues Gly192 and 213 to 214 (GH).

The protein belongs to the PNP synthase family. Homooctamer; tetramer of dimers.

Its subcellular location is the cytoplasm. It catalyses the reaction 3-amino-2-oxopropyl phosphate + 1-deoxy-D-xylulose 5-phosphate = pyridoxine 5'-phosphate + phosphate + 2 H2O + H(+). It participates in cofactor biosynthesis; pyridoxine 5'-phosphate biosynthesis; pyridoxine 5'-phosphate from D-erythrose 4-phosphate: step 5/5. Catalyzes the complicated ring closure reaction between the two acyclic compounds 1-deoxy-D-xylulose-5-phosphate (DXP) and 3-amino-2-oxopropyl phosphate (1-amino-acetone-3-phosphate or AAP) to form pyridoxine 5'-phosphate (PNP) and inorganic phosphate. The polypeptide is Pyridoxine 5'-phosphate synthase (Geobacter sp. (strain M21)).